Consider the following 466-residue polypeptide: Integrin-linked protein kinase homolog pat-4 (466 aa).

ANK repeat units lie at residues 50-79 (HAFS…RVNS), 83-112 (GDDT…DVNA), and 116-145 (HGMT…AVNV). One can recognise a Protein kinase domain in the interval 210 to 465 (LNLITKIAES…QIIPILERMI (256 aa)).

Belongs to the protein kinase superfamily. TKL Ser/Thr protein kinase family. In terms of assembly, interacts (via protein kinase domain) with unc-112 (via N-terminus). Interacts (via ANK repeats) with unc-97 (via first LIM domain). Interacts (via protein kinase domain) with pat-6 (via C-terminus CH domain). May form a complex with unc-112, unc-97 and pat-6. Does not interact with integrin pat-3. Component of an integrin containing attachment complex, composed of at least pat-2, pat-3, pat-4, pat-6, unc-52, unc-97 and unc-112. As to expression, expressed in body wall muscle.

The protein resides in the cytoplasm. It localises to the myofibril. It is found in the sarcomere. Its subcellular location is the m line. The protein localises to the basal cell membrane. In terms of biological role, probable pseudokinase that acts as an adapter protein. Component of an integrin containing attachment complex, which is required for muscle development and maintenance. Involved in the assembly of dense bodies and M lines during body wall muscle development by recruiting several of their components including integrin pat-3, cpna-1, unc-89 and unc-112 to integrin-mediated attachment sites. Plays a role in distal tip cell (DTC) migration and in oocyte development probably by regulating the actin cytoskeleton. During the formation of neuromuscular junctions at the larval stage, negatively regulates membrane protrusion from body wall muscles. May be involved in thermotolerance and lifespan. This Caenorhabditis elegans protein is Integrin-linked protein kinase homolog pat-4.